Here is a 341-residue protein sequence, read N- to C-terminus: Methionine import ATP-binding protein MetN 1 (341 aa).

The 240-residue stretch at 2-241 (IEFRQVSKTF…PKTTIAQNFV (240 aa)) folds into the ABC transporter domain. Residue 38-45 (GYSGAGKS) participates in ATP binding.

The protein belongs to the ABC transporter superfamily. Methionine importer (TC 3.A.1.24) family. The complex is composed of two ATP-binding proteins (MetN), two transmembrane proteins (MetI) and a solute-binding protein (MetQ).

The protein localises to the cell membrane. It catalyses the reaction L-methionine(out) + ATP + H2O = L-methionine(in) + ADP + phosphate + H(+). The catalysed reaction is D-methionine(out) + ATP + H2O = D-methionine(in) + ADP + phosphate + H(+). In terms of biological role, part of the ABC transporter complex MetNIQ involved in methionine import. Responsible for energy coupling to the transport system. The chain is Methionine import ATP-binding protein MetN 1 from Staphylococcus aureus (strain USA300).